The chain runs to 253 residues: Triosephosphate isomerase (253 aa).

Positions 12 and 14 each coordinate substrate. The Electrophile role is filled by His96. Glu169 acts as the Proton acceptor in catalysis.

It belongs to the triosephosphate isomerase family. As to quaternary structure, homodimer.

It localises to the cytoplasm. It catalyses the reaction D-glyceraldehyde 3-phosphate = dihydroxyacetone phosphate. The protein operates within carbohydrate biosynthesis; gluconeogenesis. It functions in the pathway carbohydrate degradation; glycolysis; D-glyceraldehyde 3-phosphate from glycerone phosphate: step 1/1. Functionally, antigen to the host M.1 monoclonal antibody. This chain is Triosephosphate isomerase (TPI), found in Schistosoma mansoni (Blood fluke).